We begin with the raw amino-acid sequence, 428 residues long: Trigger factor (428 aa).

The region spanning 163–248 (GDIVDIDFEG…VNDVKVKELP (86 aa)) is the PPIase FKBP-type domain.

This sequence belongs to the FKBP-type PPIase family. Tig subfamily.

Its subcellular location is the cytoplasm. The catalysed reaction is [protein]-peptidylproline (omega=180) = [protein]-peptidylproline (omega=0). Its function is as follows. Involved in protein export. Acts as a chaperone by maintaining the newly synthesized protein in an open conformation. Functions as a peptidyl-prolyl cis-trans isomerase. This chain is Trigger factor, found in Acetivibrio thermocellus (strain ATCC 27405 / DSM 1237 / JCM 9322 / NBRC 103400 / NCIMB 10682 / NRRL B-4536 / VPI 7372) (Clostridium thermocellum).